Consider the following 218-residue polypeptide: Capsid protein (218 aa).

Methionine 1 carries the N-acetylmethionine; by host modification. Residues 1-10 (MDKSDSASAG) are compositionally biased toward low complexity. Positions 1–28 (MDKSDSASAGRNRRRRPRRGSRSASSSA) are disordered. A compositionally biased stretch (basic residues) spans 11-21 (RNRRRRPRRGS).

This sequence belongs to the cucumovirus capsid protein family.

The protein resides in the virion. Its function is as follows. Capsid protein. Probably binds RNA and plays a role in packaging. The sequence is that of Capsid protein from Cucumber mosaic virus (strain M48) (CMV).